Here is a 319-residue protein sequence, read N- to C-terminus: Large ribosomal subunit protein uL10 (319 aa).

The tract at residues 286 to 319 (AGDSGASAAPKEEEKAAEPEEESDEEMGFSLFDD) is disordered. A compositionally biased stretch (acidic residues) spans 304–319 (PEEESDEEMGFSLFDD).

Belongs to the universal ribosomal protein uL10 family. As to quaternary structure, P0 forms a pentameric complex by interaction with dimers of P1 and P2. Post-translationally, phosphorylated.

Its function is as follows. Ribosomal protein P0 is the functional equivalent of E.coli protein L10. This chain is Large ribosomal subunit protein uL10 (RP-P0), found in Zea mays (Maize).